The chain runs to 2939 residues: Serine/threonine-protein kinase tel1 (2939 aa).

3 disordered regions span residues 193-212 (GTSVRASPAPGTPATSRAGS), 695-718 (PPEDSHKATSTDQPKREEIRAADS), and 859-886 (KTRRESPTDSDPASMDLDDEFDSQETRK). Positions 697-715 (EDSHKATSTDQPKREEIRA) are enriched in basic and acidic residues. Residues 1869 to 2471 (IAAAAATRCG…MYQIWSGVKA (603 aa)) enclose the FAT domain. The 314-residue stretch at 2577-2890 (FEPQMSIASG…DKKSTKNLNE (314 aa)) folds into the PI3K/PI4K catalytic domain. The interval 2583–2589 (IASGVSA) is G-loop. Residues 2755–2763 (GLGDRHGHN) are catalytic loop. Residues 2775 to 2799 (HIDLGVAFELGRILPVPELVPFRLT) are activation loop. The tract at residues 2869 to 2894 (DVVEAEDERRAGDKKSTKNLNEPSEA) is disordered. The span at 2875–2884 (DERRAGDKKS) shows a compositional bias: basic and acidic residues. An FATC domain is found at 2907-2939 (KTLSVMATVNDLINQATDERNLAVLFCGWAAYA).

This sequence belongs to the PI3/PI4-kinase family. ATM subfamily. Associates with DNA double-strand breaks.

The protein localises to the nucleus. It is found in the chromosome. The protein resides in the telomere. The enzyme catalyses L-seryl-[protein] + ATP = O-phospho-L-seryl-[protein] + ADP + H(+). The catalysed reaction is L-threonyl-[protein] + ATP = O-phospho-L-threonyl-[protein] + ADP + H(+). Serine/threonine protein kinase which activates checkpoint signaling upon genotoxic stresses such as ionizing radiation (IR), ultraviolet light (UV), or DNA replication stalling, thereby acting as a DNA damage sensor. Recognizes the substrate consensus sequence [ST]-Q. Phosphorylates histone H2A to form H2AS128ph (gamma-H2A) at sites of DNA damage, involved in the regulation of DNA damage response mechanism. Required for the control of telomere length and genome stability. The chain is Serine/threonine-protein kinase tel1 (mus-21) from Neurospora crassa (strain ATCC 24698 / 74-OR23-1A / CBS 708.71 / DSM 1257 / FGSC 987).